The following is a 109-amino-acid chain: Aquaporin-2 (109 aa).

The Cytoplasmic portion of the chain corresponds to 1-6 (SIAFSR). Residues 7–27 (AVFSEFLATLLFVFFGLGSAL) traverse the membrane as a helical segment. At 28 to 35 (NWPQALPS) the chain is on the extracellular side. A helical membrane pass occupies residues 36–54 (VLQIAMAFGLAIGTLVQTL). The Cytoplasmic portion of the chain corresponds to 55 to 59 (GHISG). Positions 60-69 (AHINPAVTVA) form an intramembrane region, discontinuously helical. The short motif at 63–65 (NPA) is the NPA 1 element. The Cytoplasmic portion of the chain corresponds to 70–80 (CLVGCHVSFLR). The chain crosses the membrane as a helical span at residues 81–102 (ATFYVAAQLLGAVAGAALLHEL). Over 103–109 (TPPDIRG) the chain is Extracellular.

Belongs to the MIP/aquaporin (TC 1.A.8) family. Homotetramer. In terms of processing, serine phosphorylation is necessary and sufficient for expression at the apical membrane. Endocytosis is not phosphorylation-dependent. Post-translationally, N-glycosylated.

It is found in the apical cell membrane. The protein localises to the basolateral cell membrane. The protein resides in the cell membrane. It localises to the cytoplasmic vesicle membrane. Its subcellular location is the golgi apparatus. It is found in the trans-Golgi network membrane. It catalyses the reaction H2O(in) = H2O(out). The enzyme catalyses glycerol(in) = glycerol(out). Functionally, forms a water-specific channel that provides the plasma membranes of renal collecting duct with high permeability to water, thereby permitting water to move in the direction of an osmotic gradient. Plays an essential role in renal water homeostasis. Could also be permeable to glycerol. This Amblysomus hottentotus (Hottentot golden mole) protein is Aquaporin-2.